A 271-amino-acid polypeptide reads, in one-letter code: Rhomboid-type serine protease 2 (271 aa).

The next 6 membrane-spanning stretches (helical) occupy residues 16–36 (GLAV…NLVY), 64–84 (HLSF…IVMF), 89–111 (GTLY…YCLI), 115–137 (LFPN…YFAV), 152–172 (FSFP…LLAP), and 176–196 (LPGH…ENWV). Ser125 (nucleophile) is an active-site residue. His179 is an active-site residue. Residues 252–271 (HNTDTPAEPTFQGNGRVLGN) are disordered.

The protein belongs to the peptidase S54 family.

It is found in the golgi apparatus membrane. Its subcellular location is the golgi apparatus. It localises to the cis-Golgi network membrane. It catalyses the reaction Cleaves type-1 transmembrane domains using a catalytic dyad composed of serine and histidine that are contributed by different transmembrane domains.. Probable rhomboid-type serine protease that catalyzes intramembrane proteolysis. The polypeptide is Rhomboid-type serine protease 2 (RBD2) (Kluyveromyces lactis (strain ATCC 8585 / CBS 2359 / DSM 70799 / NBRC 1267 / NRRL Y-1140 / WM37) (Yeast)).